The chain runs to 259 residues: Acyl-[acyl-carrier-protein]--UDP-N-acetylglucosamine O-acyltransferase (259 aa).

Belongs to the transferase hexapeptide repeat family. LpxA subfamily. As to quaternary structure, homotrimer.

It localises to the cytoplasm. The catalysed reaction is a (3R)-hydroxyacyl-[ACP] + UDP-N-acetyl-alpha-D-glucosamine = a UDP-3-O-[(3R)-3-hydroxyacyl]-N-acetyl-alpha-D-glucosamine + holo-[ACP]. It participates in glycolipid biosynthesis; lipid IV(A) biosynthesis; lipid IV(A) from (3R)-3-hydroxytetradecanoyl-[acyl-carrier-protein] and UDP-N-acetyl-alpha-D-glucosamine: step 1/6. Involved in the biosynthesis of lipid A, a phosphorylated glycolipid that anchors the lipopolysaccharide to the outer membrane of the cell. The sequence is that of Acyl-[acyl-carrier-protein]--UDP-N-acetylglucosamine O-acyltransferase from Psychrobacter sp. (strain PRwf-1).